The chain runs to 566 residues: Chaperone Ric-8 (566 aa).

This sequence belongs to the synembryn family. In terms of assembly, interacts with GDP-bound G(i)-alpha protein. Does not interact with G-alpha proteins when they are in complex with subunits beta and gamma. Interacts with Frq2 in a Ca(2+)-independent manner but does not interact with Frq1.

The protein localises to the cytoplasm. It is found in the cell cortex. It localises to the presynapse. Its function is as follows. Chaperone that specifically binds and folds some, but not all, nascent G alpha proteins prior to G protein heterotrimer formation, promoting their stability and activity. Also acts as a guanine nucleotide exchange factor (GEF) for G alpha proteins by stimulating exchange of bound GDP for free GTP. Plays a key role in asymmetric spindle positioning, a step for asymmetric cell division that generates cell diversity during development by activating G(i) alpha protein independently of G-protein coupled receptors. Required during gastrulation and sensory organ precursor (SOP) formation. Plays a role in positively regulating synapse number and neurotransmitter release. The polypeptide is Chaperone Ric-8 (ric8a) (Drosophila pseudoobscura pseudoobscura (Fruit fly)).